The sequence spans 439 residues: Mitochondrial distribution and morphology protein 12 (439 aa).

Positions 1 to 439 (MSIDVNWRFA…VYPSFWTFLI (439 aa)) constitute an SMP-LTD domain. Disordered regions lie at residues 70-103 (YEED…LNEP), 185-274 (GWSD…PPRM), and 354-386 (PEQQ…RHGG). Positions 78–91 (TSDASEERGEEHSS) are enriched in basic and acidic residues. The segment covering 215–245 (DTSNSTSRPSTANTLPSHPSGSSKNSGQAAT) has biased composition (polar residues). Basic and acidic residues-rich tracts occupy residues 247 to 261 (RNDH…HLED) and 362 to 371 (SAGDDHRPQS).

It belongs to the MDM12 family. Component of the ER-mitochondria encounter structure (ERMES) or MDM complex, composed of mmm1, mdm10, mdm12 and mdm34. A mmm1 homodimer associates with one molecule of mdm12 on each side in a pairwise head-to-tail manner, and the SMP-LTD domains of mmm1 and mdm12 generate a continuous hydrophobic tunnel for phospholipid trafficking.

It is found in the mitochondrion outer membrane. The protein localises to the endoplasmic reticulum membrane. In terms of biological role, component of the ERMES/MDM complex, which serves as a molecular tether to connect the endoplasmic reticulum (ER) and mitochondria. Components of this complex are involved in the control of mitochondrial shape and protein biogenesis, and function in nonvesicular lipid trafficking between the ER and mitochondria. Mdm12 is required for the interaction of the ER-resident membrane protein mmm1 and the outer mitochondrial membrane-resident beta-barrel protein mdm10. The mdm12-mmm1 subcomplex functions in the major beta-barrel assembly pathway that is responsible for biogenesis of all mitochondrial outer membrane beta-barrel proteins, and acts in a late step after the SAM complex. The mdm10-mdm12-mmm1 subcomplex further acts in the TOM40-specific pathway after the action of the mdm12-mmm1 complex. Essential for establishing and maintaining the structure of mitochondria and maintenance of mtDNA nucleoids. The polypeptide is Mitochondrial distribution and morphology protein 12 (Aspergillus fumigatus (strain CBS 144.89 / FGSC A1163 / CEA10) (Neosartorya fumigata)).